Consider the following 453-residue polypeptide: CBL-interacting protein kinase 24 (453 aa).

Residues 18-271 (YEVGRTIGQG…IEQIREDTWF (254 aa)) form the Protein kinase domain. ATP contacts are provided by residues 24–32 (IGQGTFAKV) and lysine 47. Aspartate 141 serves as the catalytic Proton acceptor. The interval 159–186 (DFGLSTLAQKGVGLLHTTCGTPNYVAPE) is activation loop. Positions 310 to 336 (NDGGPLVMNAFEMITLSQGLDLSALFD) constitute an NAF domain. The segment at 343–372 (KRQTRFVSRKPAKTIVATIEVVAETMGLKV) is PPI.

It belongs to the protein kinase superfamily. CAMK Ser/Thr protein kinase family. SNF1 subfamily. In terms of assembly, interacts with CBL4. Requires Mn(2+) as cofactor.

It carries out the reaction L-seryl-[protein] + ATP = O-phospho-L-seryl-[protein] + ADP + H(+). It catalyses the reaction L-threonyl-[protein] + ATP = O-phospho-L-threonyl-[protein] + ADP + H(+). In terms of biological role, involved in the regulatory pathway for the control of intracellular Na(+) and K(+) homeostasis and salt tolerance. Operates in synergy with CBL4 to activate the plasma membrane Na(+)/H(+) antiporter SOS1. CIPK serine-threonine protein kinases interact with CBL proteins. Binding of a CBL protein to the regulatory NAF domain of CIPK protein lead to the activation of the kinase in a calcium-dependent manner. The chain is CBL-interacting protein kinase 24 (CIPK24) from Oryza sativa subsp. japonica (Rice).